Here is a 143-residue protein sequence, read N- to C-terminus: Ribosome maturation factor RimP (143 aa).

This sequence belongs to the RimP family.

The protein resides in the cytoplasm. Its function is as follows. Required for maturation of 30S ribosomal subunits. This Neisseria meningitidis serogroup C (strain 053442) protein is Ribosome maturation factor RimP.